The sequence spans 283 residues: Polyamine aminopropyltransferase (283 aa).

The region spanning 5-238 is the PABS domain; the sequence is TTWIDEYHKG…GIWSWTFASS (234 aa). Position 32 (Gln-32) interacts with S-methyl-5'-thioadenosine. Spermidine contacts are provided by His-63 and Asp-87. S-methyl-5'-thioadenosine-binding positions include Glu-107 and 139-140; that span reads DG. The active-site Proton acceptor is Asp-158. 158-161 lines the spermidine pocket; that stretch reads DCSD.

The protein belongs to the spermidine/spermine synthase family. In terms of assembly, homodimer or homotetramer.

The protein localises to the cytoplasm. The catalysed reaction is S-adenosyl 3-(methylsulfanyl)propylamine + putrescine = S-methyl-5'-thioadenosine + spermidine + H(+). Its pathway is amine and polyamine biosynthesis; spermidine biosynthesis; spermidine from putrescine: step 1/1. In terms of biological role, catalyzes the irreversible transfer of a propylamine group from the amino donor S-adenosylmethioninamine (decarboxy-AdoMet) to putrescine (1,4-diaminobutane) to yield spermidine. The polypeptide is Polyamine aminopropyltransferase (Prochlorococcus marinus (strain AS9601)).